The primary structure comprises 122 residues: Modulator protein MzrA (122 aa).

Over 1–10 (MKILTRIPRR) the chain is Cytoplasmic. A helical transmembrane segment spans residues 11–31 (LLPWLLGGALALVAVSFAPAL). At 32 to 122 (LSHETVVQIR…NQDANRSIYS (91 aa)) the chain is on the periplasmic side.

This sequence belongs to the MzrA family. As to quaternary structure, interacts with EnvZ.

The protein resides in the cell inner membrane. Modulates the activity of the EnvZ/OmpR two-component regulatory system, probably by directly modulating EnvZ enzymatic activity and increasing stability of phosphorylated OmpR. The polypeptide is Modulator protein MzrA (Pantoea sp. (strain At-9b)).